The chain runs to 356 residues: MKSKHRFIQACFRQPVDRTPIWLMRQAGRYLPEYRKTRAQAGDFMALCKNTELATEVTMQPIRRYGLDAAILFSDILVIPEAMGMDVRFATGEGPLLDPPVRVHGDIEKLIHTDPEDSLDYVMRAVASIRKALNEEIPLIGFSGSPWTLATYMVEGGSSKTFGLVKGMLYDAPESMHLLLDKLADMVAAYLNAQIRHGAQAVQIFDTWGGVLSQPTFREFSLRSMKAVVDRLDRTNSAGERIPVILFAKGCNAMVEDIAQSGCDVVGLDWTSEIGPLRERIGHKVALQGNMDPALLYASPERIAQGAREVLQAFGPHPGHIFNLGHGMAPDMSPDHVEALVRAVKEEGLKIHQGVA.

Residues 25–29 (RQAGR), Asp-75, Tyr-152, Thr-207, and His-326 contribute to the substrate site.

It belongs to the uroporphyrinogen decarboxylase family. Homodimer.

The protein localises to the cytoplasm. It carries out the reaction uroporphyrinogen III + 4 H(+) = coproporphyrinogen III + 4 CO2. It functions in the pathway porphyrin-containing compound metabolism; protoporphyrin-IX biosynthesis; coproporphyrinogen-III from 5-aminolevulinate: step 4/4. Catalyzes the decarboxylation of four acetate groups of uroporphyrinogen-III to yield coproporphyrinogen-III. The polypeptide is Uroporphyrinogen decarboxylase (Magnetococcus marinus (strain ATCC BAA-1437 / JCM 17883 / MC-1)).